A 238-amino-acid chain; its full sequence is D-aminoacyl-tRNA deacylase (238 aa).

This sequence belongs to the DtdA deacylase family. In terms of assembly, monomer. It depends on Zn(2+) as a cofactor.

The enzyme catalyses a D-aminoacyl-tRNA + H2O = a tRNA + a D-alpha-amino acid + H(+). It catalyses the reaction glycyl-tRNA(Ala) + H2O = tRNA(Ala) + glycine + H(+). The catalysed reaction is D-tyrosyl-tRNA(Tyr) + H2O = D-tyrosine + tRNA(Tyr). Functionally, D-aminoacyl-tRNA deacylase with broad substrate specificity. By recycling D-aminoacyl-tRNA to D-amino acids and free tRNA molecules, this enzyme counteracts the toxicity associated with the formation of D-aminoacyl-tRNA entities in vivo. Catalyzes the hydrolysis of D-tyrosyl-tRNA(Tyr). The chain is D-aminoacyl-tRNA deacylase from Saccharolobus solfataricus (strain ATCC 35092 / DSM 1617 / JCM 11322 / P2) (Sulfolobus solfataricus).